The chain runs to 244 residues: Orotidine 5'-phosphate decarboxylase (244 aa).

Substrate-binding positions include D20, K42, D70–T79, T125, R186, Q195, G215, and R216. Catalysis depends on K72, which acts as the Proton donor.

Belongs to the OMP decarboxylase family. Type 1 subfamily. In terms of assembly, homodimer.

It catalyses the reaction orotidine 5'-phosphate + H(+) = UMP + CO2. It participates in pyrimidine metabolism; UMP biosynthesis via de novo pathway; UMP from orotate: step 2/2. In terms of biological role, catalyzes the decarboxylation of orotidine 5'-monophosphate (OMP) to uridine 5'-monophosphate (UMP). This Xylella fastidiosa (strain M23) protein is Orotidine 5'-phosphate decarboxylase.